A 608-amino-acid chain; its full sequence is Chaperone protein HtpG (608 aa).

The tract at residues 1 to 332 (MQFQTEVNQL…VEDLPLNVSR (332 aa)) is a; substrate-binding. The interval 333 to 536 (EILQENQILK…KNKPDFAMQQ (204 aa)) is b. Residues 537–608 (LLKQMGQEQN…LTKIINKAFS (72 aa)) are c.

This sequence belongs to the heat shock protein 90 family. In terms of assembly, homodimer.

The protein resides in the cytoplasm. Functionally, molecular chaperone. Has ATPase activity. This chain is Chaperone protein HtpG, found in Campylobacter jejuni subsp. jejuni serotype O:6 (strain 81116 / NCTC 11828).